The sequence spans 190 residues: 6,7-dimethyl-8-ribityllumazine synthase (190 aa).

5-amino-6-(D-ribitylamino)uracil contacts are provided by residues Phe23, Ser61 to Glu63, and Ala85 to Ile87. Gln90–Thr91 contacts (2S)-2-hydroxy-3-oxobutyl phosphate. His93 serves as the catalytic Proton donor. A 5-amino-6-(D-ribitylamino)uracil-binding site is contributed by Phe118. A (2S)-2-hydroxy-3-oxobutyl phosphate-binding site is contributed by Arg132.

The protein belongs to the DMRL synthase family.

The enzyme catalyses (2S)-2-hydroxy-3-oxobutyl phosphate + 5-amino-6-(D-ribitylamino)uracil = 6,7-dimethyl-8-(1-D-ribityl)lumazine + phosphate + 2 H2O + H(+). Its pathway is cofactor biosynthesis; riboflavin biosynthesis; riboflavin from 2-hydroxy-3-oxobutyl phosphate and 5-amino-6-(D-ribitylamino)uracil: step 1/2. Functionally, catalyzes the formation of 6,7-dimethyl-8-ribityllumazine by condensation of 5-amino-6-(D-ribitylamino)uracil with 3,4-dihydroxy-2-butanone 4-phosphate. This is the penultimate step in the biosynthesis of riboflavin. The protein is 6,7-dimethyl-8-ribityllumazine synthase of Trichormus variabilis (strain ATCC 29413 / PCC 7937) (Anabaena variabilis).